A 458-amino-acid chain; its full sequence is uncharacterized protein (458 aa).

Belongs to the glycerate kinase type-2 family.

This is an uncharacterized protein from Caenorhabditis elegans.